The following is a 485-amino-acid chain: NADH-quinone oxidoreductase subunit N (485 aa).

14 helical membrane passes run 8–28 (LIAL…MLSI), 35–55 (FLNA…LWFV), 71–91 (GFAM…CTFA), 105–125 (FYLL…ANHL), 127–147 (ALFL…GYAF), 159–179 (YTIL…LVYA), 203–223 (LLAG…LVPF), 235–255 (PAPV…GVVM), 271–291 (VVLG…ALSQ), 297–317 (LLGY…IALQ), 326–346 (VGVY…VVSL), 373–393 (AAVM…LGFI), 408–430 (WWLV…RVAV), and 455–475 (IVVL…QPLI).

The protein belongs to the complex I subunit 2 family. In terms of assembly, NDH-1 is composed of 13 different subunits. Subunits NuoA, H, J, K, L, M, N constitute the membrane sector of the complex.

The protein resides in the cell inner membrane. The enzyme catalyses a quinone + NADH + 5 H(+)(in) = a quinol + NAD(+) + 4 H(+)(out). Functionally, NDH-1 shuttles electrons from NADH, via FMN and iron-sulfur (Fe-S) centers, to quinones in the respiratory chain. The immediate electron acceptor for the enzyme in this species is believed to be ubiquinone. Couples the redox reaction to proton translocation (for every two electrons transferred, four hydrogen ions are translocated across the cytoplasmic membrane), and thus conserves the redox energy in a proton gradient. This chain is NADH-quinone oxidoreductase subunit N, found in Salmonella typhimurium (strain LT2 / SGSC1412 / ATCC 700720).